Here is a 121-residue protein sequence, read N- to C-terminus: Putative iron-sulfur cluster insertion protein ErpA (121 aa).

Iron-sulfur cluster is bound by residues Cys49, Cys113, and Cys115.

The protein belongs to the HesB/IscA family. Homodimer. Requires iron-sulfur cluster as cofactor.

In terms of biological role, required for insertion of 4Fe-4S clusters. The chain is Putative iron-sulfur cluster insertion protein ErpA from Nitrosomonas europaea (strain ATCC 19718 / CIP 103999 / KCTC 2705 / NBRC 14298).